A 386-amino-acid chain; its full sequence is Methionine aminopeptidase 1 (386 aa).

The segment at 6–59 (TRECETEGCHSEAKLQCPTCIKLGIQGSYFCSQECFKGSWATHKLLHKKAKEDK) adopts a C6H2-type zinc-finger fold. Residues Cys-9, Cys-14, Cys-22, Cys-25, Cys-36, Cys-40, His-48, and His-52 each contribute to the Zn(2+) site. Residue His-202 participates in a protein binding. 3 residues coordinate Zn(2+): Asp-219, Asp-230, and His-293. His-300 provides a ligand contact to a protein. Zn(2+) is bound by residues Glu-326 and Glu-357.

This sequence belongs to the peptidase M24A family. Methionine aminopeptidase type 1 subfamily. Associates with the 60S ribosomal subunit of the 80S translational complex. The cofactor is Zn(2+). Co(2+) serves as cofactor. Mn(2+) is required as a cofactor. Requires Fe(2+) as cofactor.

It localises to the cytoplasm. The catalysed reaction is Release of N-terminal amino acids, preferentially methionine, from peptides and arylamides.. Cotranslationally removes the N-terminal methionine from nascent proteins. The N-terminal methionine is often cleaved when the second residue in the primary sequence is small and uncharged (Met-Ala-, Cys, Gly, Pro, Ser, Thr, or Val). The chain is Methionine aminopeptidase 1 (metap1) from Danio rerio (Zebrafish).